Reading from the N-terminus, the 419-residue chain is Glutamyl-tRNA reductase (419 aa).

Substrate-binding positions include 49–52 (TCNR), Ser-107, 112–114 (EPQ), and Gln-118. The active-site Nucleophile is the Cys-50. 187–192 (GAGETI) contacts NADP(+).

This sequence belongs to the glutamyl-tRNA reductase family. As to quaternary structure, homodimer.

The enzyme catalyses (S)-4-amino-5-oxopentanoate + tRNA(Glu) + NADP(+) = L-glutamyl-tRNA(Glu) + NADPH + H(+). Its pathway is porphyrin-containing compound metabolism; protoporphyrin-IX biosynthesis; 5-aminolevulinate from L-glutamyl-tRNA(Glu): step 1/2. In terms of biological role, catalyzes the NADPH-dependent reduction of glutamyl-tRNA(Glu) to glutamate 1-semialdehyde (GSA). In Vibrio vulnificus (strain CMCP6), this protein is Glutamyl-tRNA reductase.